Consider the following 264-residue polypeptide: Phosphonoacetaldehyde hydrolase (264 aa).

D9 serves as the catalytic Nucleophile. Mg(2+)-binding residues include D9 and A11. The active-site Schiff-base intermediate with substrate is K50. Position 183 (D183) interacts with Mg(2+).

This sequence belongs to the HAD-like hydrolase superfamily. PhnX family. As to quaternary structure, homodimer. Mg(2+) serves as cofactor.

It catalyses the reaction phosphonoacetaldehyde + H2O = acetaldehyde + phosphate + H(+). Its function is as follows. Involved in phosphonate degradation. The chain is Phosphonoacetaldehyde hydrolase from Bacillus cereus (strain AH820).